Here is a 156-residue protein sequence, read N- to C-terminus: Small ribosomal subunit protein uS7 (156 aa).

This sequence belongs to the universal ribosomal protein uS7 family. In terms of assembly, part of the 30S ribosomal subunit. Contacts proteins S9 and S11.

Its function is as follows. One of the primary rRNA binding proteins, it binds directly to 16S rRNA where it nucleates assembly of the head domain of the 30S subunit. Is located at the subunit interface close to the decoding center, probably blocks exit of the E-site tRNA. The sequence is that of Small ribosomal subunit protein uS7 from Onion yellows phytoplasma (strain OY-M).